We begin with the raw amino-acid sequence, 247 residues long: uncharacterized protein (247 aa).

The N-terminal stretch at 1–35 is a signal peptide; that stretch reads MWGPGVTAEGLSVAPAPPPLLPLLLLLALALVAPS. Asparagine 57 carries N-linked (GlcNAc...) asparagine glycosylation. Residues 82–102 traverse the membrane as a helical segment; that stretch reads LSGLLILLVLFAIGYFLQRII. Positions 109–179 are disordered; that stretch reads YPRGQARPGQ…GGRSDPSCAS (71 aa). Residues 160 to 172 are compositionally biased toward gly residues; sequence SGGGGRGRGGGGR.

Its subcellular location is the membrane. This is an uncharacterized protein from Homo sapiens (Human).